We begin with the raw amino-acid sequence, 533 residues long: Glucose-6-phosphate exchanger SLC37A1 (533 aa).

Residues 18–38 form a helical membrane-spanning segment; the sequence is QWYRAFIFILTFLLYASFHLS. An N-linked (GlcNAc...) asparagine glycan is attached at Asn81. The next 4 helical transmembrane spans lie at 100–120, 129–149, 157–177, and 222–242; these read GALD…SGII, YLTF…LGYF, FYVV…PSVV, and SFVV…LFLI. The N-linked (GlcNAc...) asparagine glycan is linked to Asn263. Helical transmembrane passes span 304-324, 334-354, 366-386, 394-414, 423-443, 466-486, and 490-510; these read VVIL…TGAL, LCLL…PLYI, GELS…AGVI, ASTC…FSTV, IAML…ITTA, AIID…AGLL, and GWSN…LFLI.

This sequence belongs to the major facilitator superfamily. Organophosphate:Pi antiporter (OPA) (TC 2.A.1.4) family. In terms of tissue distribution, expressed in numerous tissues, with highest expression in pancreas, kidney, bone marrow, spleen, liver, small intestine, as well as in fetal brain, liver and spleen.

Its subcellular location is the endoplasmic reticulum membrane. It catalyses the reaction D-glucose 6-phosphate(in) + phosphate(out) = D-glucose 6-phosphate(out) + phosphate(in). With respect to regulation, inhibited by vanadate but not by chlorogenic acid. Inorganic phosphate and glucose-6-phosphate antiporter. May transport cytoplasmic glucose-6-phosphate into the lumen of the endoplasmic reticulum and translocate inorganic phosphate into the opposite direction. Independent of a lumenal glucose-6-phosphatase. May not play a role in homeostatic regulation of blood glucose levels. The chain is Glucose-6-phosphate exchanger SLC37A1 from Homo sapiens (Human).